Reading from the N-terminus, the 58-residue chain is Small ribosomal subunit protein bS21 (58 aa).

A disordered region spans residues 35–58; that stretch reads REHYEKPSVKKKKKSEAARKRKFK. Residues 43 to 58 are compositionally biased toward basic residues; it reads VKKKKKSEAARKRKFK.

Belongs to the bacterial ribosomal protein bS21 family.

The polypeptide is Small ribosomal subunit protein bS21 (Clostridium botulinum (strain Alaska E43 / Type E3)).